A 434-amino-acid polypeptide reads, in one-letter code: MTQDVVTVSSQTAGTIKESGTHSNPDNKTTSPSTWKSLSKYACFDSEAERQWWNDSGALIARFLDIAKGDIHEQYQYLLFVREVVIPALGPYPPIRRCCINITEIGIELSLNYQGPGKPVFRVSLDPISEMSGTPMDPLNIDTVNDTVARLASIGLKDFDRTLHYHFMSEFCMPEEKAKTYQQDSREPMAWSQMILGFDFKDGNVVTKEYIWTRHAAHASGLHPHAIIRRAISRVDDQMRCSAAVNLVLEYMETFNADIPVPFFSWDLIDPSESRLKLYGIAWQWSWAKVEEVCTLGGKLQGPATDRSIGLLRKLWGILKLDEFTPSMAFTWNYEILPGQTHPNVRIYFAICDRSDEEVAQAVSQWFNLLGWHETARSYPETLRYLQPNRDLKKTNTAHTWLSITVTEKGVYTSLYYHPLGNGPDDHNIRKTWF.

Polar residues-rich tracts occupy residues 1 to 14 (MTQDVVTVSSQTAG) and 21 to 35 (THSNPDNKTTSPSTW). The interval 1–35 (MTQDVVTVSSQTAGTIKESGTHSNPDNKTTSPSTW) is disordered. L-tryptophan-binding positions include 104–105 (EI) and Glu-108. 6 residues coordinate substrate: Arg-122, Lys-208, Arg-275, Lys-277, Tyr-279, and Tyr-348.

This sequence belongs to the tryptophan dimethylallyltransferase family.

The catalysed reaction is yaequinolone E + dimethylallyl diphosphate + H2O = [(1'E)-3'-hydroxy-3',7'-dimethylocta-1',6'-dien-1'-yl]-quinolinone B + diphosphate. The protein operates within secondary metabolite biosynthesis. It participates in alkaloid biosynthesis. Its pathway is mycotoxin biosynthesis. Functionally, prenyltransferase; part of the gene cluster that mediates the biosynthesis of penigequinolones, potent insecticidal alkaloids that contain a highly modified 10-carbon prenyl group. The first stage is catalyzed by the nonribosomal peptide synthetase penN that condenses anthranilic acid and O-methyl-L-tyrosine to produce 4'-methoxycyclopeptin. 4'-methoxycyclopeptin is then converted to 4'-methoxydehydrocyclopeptin by the ketoglutarate-dependent dioxygenase penM through dehydrogenation to form a double bond between C-alpha and C-beta of the O-methyltyrosine side chain. PenM also converts its first product methoxydehydrocyclopeptin to 4'-methoxycyclopenin. The following conversion of 4'methoxycyclopenin into 4'-methoxyviridicatin is catalyzed by the cyclopenase penL. 4'-methoxyviridicatin is the precursor of quinolone natural products, and is further converted to quinolinone B. The prenyltransferase penI then catalyzes the canonical Friedel-Crafts alkylation of quinolinone B with dimethylallyl cation to yield dimethylallyl quinolone, which is subjected to FAD-dependent dehydrogenation by the FAD-linked oxidoreductase penH to yield conjugated aryl diene. The delta(3') double bond then serves as the site of the second alkylation with DMAPP catalyzed by the prenyltransferase penG to yield a carbenium ion intermediate, which can be attacked by H(2)O to yield a styrenyl quinolone containing a C3'-hydroxyprenyl chain, or undergo cyclization to yield yaequinolones J1 and J2. The conversion of the styrenyl quinolone into the tetrahydrofuran-containing yaequinolone C is performed by the FAD-dependent monooxygenase penE and involves epoxidation of the terminal C7'-C8' olefin, followed by epoxide ring opening initiated by the C3' hydroxyl group. The predicted cysteine hydrolase penJ acts as an epoxide hydrolase that enhances the rate of the 5-exo-tet cyclization step, increasing the yield of yaequinolone C. PenF catalyzes the cationic rearrangement of the epoxide formed by penE (before ring opening to produce yaequinolone C) into yaequinolone D. Finally, the short-chain dehydrogenase/reductase (SDR)-like reductase penD, catalyzes both the dehydration of yaequinolone D and the reduction of the resulting oxonium to yield penigequinolone. The chain is Prenyltransferase penG from Penicillium thymicola.